Reading from the N-terminus, the 546-residue chain is Chaperonin GroEL (546 aa).

ATP contacts are provided by residues 30–33 (TLGP), lysine 51, 87–91 (DGTTT), glycine 415, 479–481 (NAA), and aspartate 495. A disordered region spans residues 527-546 (EEKPDVSASSGGMGGMGGMM). Positions 537–546 (GGMGGMGGMM) are enriched in gly residues.

This sequence belongs to the chaperonin (HSP60) family. Forms a cylinder of 14 subunits composed of two heptameric rings stacked back-to-back. Interacts with the co-chaperonin GroES.

The protein resides in the cytoplasm. The enzyme catalyses ATP + H2O + a folded polypeptide = ADP + phosphate + an unfolded polypeptide.. In terms of biological role, together with its co-chaperonin GroES, plays an essential role in assisting protein folding. The GroEL-GroES system forms a nano-cage that allows encapsulation of the non-native substrate proteins and provides a physical environment optimized to promote and accelerate protein folding. This is Chaperonin GroEL from Baumannia cicadellinicola subsp. Homalodisca coagulata.